A 315-amino-acid polypeptide reads, in one-letter code: FAD-linked oxidoreductase sthB (315 aa).

In terms of domain architecture, FAD-binding PCMH-type spans 19–201 (QPCSLGNYVS…LSMTSRVHAD (183 aa)).

This sequence belongs to the oxygen-dependent FAD-linked oxidoreductase family.

It catalyses the reaction betaenone C = betaenone A. The enzyme catalyses stemphyloxin I = stemphyloxin II. It functions in the pathway mycotoxin biosynthesis. Its function is as follows. FAD-linked oxidoreductase; part of the gene cluster that mediates the biosynthesis of the phytotoxin stemphyloxin II. The first step of the pathway is the synthesis of dehydroprobetaenone I by the polyketide synthase sthA and the enoyl reductase sthE via condensation of one acetyl-CoA starter unit with 7 malonyl-CoA units and 5 methylations. The C-terminal reductase (R) domain of sthA catalyzes the reductive release of the polyketide chain. Because sthA lacks a designated enoylreductase (ER) domain, the required activity is provided the enoyl reductase sthE. The short-chain dehydrogenase/reductase sthC then catalyzes reduction of dehydroprobetaenone I to probetaenone I. The cytochrome P450 monooxygenase sthF catalyzes successive epoxidation, oxidation (resulting from epoxide opening) and hydroxylation to install a tertiary alcohol in the decaline ring to yield betaenone C from dehydroprobetaenone I and betaenone B from probetaenone I. The FAD-linked oxidoreductase sthB is responsible for the conversion of betaenone C to betaenone A via an intramolecular aldol reaction between C-1 and C-17 to form the bridged tricyclic system in betaenone A. Finally, the cytochrome P450 monooxygenase sthD catalyzes the hydroxylation of C-15 to afford the final metabolite stemphyloxin II. The chain is FAD-linked oxidoreductase sthB from Phaeosphaeria nodorum (strain SN15 / ATCC MYA-4574 / FGSC 10173) (Glume blotch fungus).